The chain runs to 576 residues: MAPISLSDIISALPSEDSWGPSTTSETTLNGVPYAPYSKGDKLGRMADWTAEGKDGRDGRGGRQQYNRNYRDQQVYGAGTSSLFAVQLAEDESTFSVVSNTRDSTKTRFGRGGLARGRGQRGGRGDTRGGRGQFQRVGGRGGQQGYNSYDTRGGRGGARGGRKFGWKDYDKPQRNRDASVNIKPDWKMLEEIDFNRLAKLNLDTDDGEDIDSYGFLYYYDRSFDKQPVKAAERKLNVVDRASYNVTTSSDPVIQELAEKDEATIFATDSILSMLMCSPRSVYPWDIVIVRQGNKVFLDKRDNATLDMVTVNENAADAPMDASEGSKDAINQPSALAEEATYINHNFANQVMKESDSQKVEMENENPFYNSAEETDPPASKAYKYRKFDLSLNDEDPVHLVVRTELDAVSKNAISGEDQFLTVKALNEFDSKAQGSGGALDWRTKLVSQRGAVVATEMKNNSCKLARWTVQSIIAKADVMKLGFVSRANPKLNDRHVVLGVIGWKPRDFASQMNLSLSNGWGIVRTIVDMCLKREEGKYVLVKDPNKPILRLYQVPAGSFEDDGEHDVIEENVEEDD.

The interval 103-176 is disordered; sequence DSTKTRFGRG…KDYDKPQRNR (74 aa). The span at 110–122 shows a compositional bias: gly residues; it reads GRGGLARGRGQRG. The segment covering 165 to 176 has biased composition (basic and acidic residues); sequence GWKDYDKPQRNR. The RNA gate stretch occupies residues 304–318; that stretch reads TLDMVTVNENAADAP.

It belongs to the eIF-3 subunit D family. In terms of assembly, component of the eukaryotic translation initiation factor 3 (eIF-3) complex.

The protein resides in the cytoplasm. MRNA cap-binding component of the eukaryotic translation initiation factor 3 (eIF-3) complex, which is involved in protein synthesis of a specialized repertoire of mRNAs and, together with other initiation factors, stimulates binding of mRNA and methionyl-tRNAi to the 40S ribosome. The eIF-3 complex specifically targets and initiates translation of a subset of mRNAs involved in cell proliferation. In the eIF-3 complex, eif3d specifically recognizes and binds the 7-methylguanosine cap of a subset of mRNAs. This chain is Eukaryotic translation initiation factor 3 subunit D, found in Botryotinia fuckeliana (strain B05.10) (Noble rot fungus).